A 739-amino-acid chain; its full sequence is NAD(P)H-quinone oxidoreductase subunit 5, chloroplastic (739 aa).

16 helical membrane-spanning segments follow: residues 9–29 (WVIP…LILI), 39–59 (IWAF…VQLS), 89–109 (IDPL…LVLI), 125–145 (FVYI…SNLI), 147–167 (IYFF…FWFT), 185–205 (GDFG…SLEF), 219–239 (NGVN…GAVA), 258–278 (TPIS…FLLA), 280–300 (LLPL…VGTI), 327–347 (LGYM…FHLI), 354–374 (ALLF…VGYS), 396–416 (TTFL…CFWS), 425–445 (WLYS…TAFY), 542–562 (LFPL…GISF), 610–630 (TLAI…YSFF), and 719–739 (ISSY…FFLS).

Belongs to the complex I subunit 5 family. In terms of assembly, NDH is composed of at least 16 different subunits, 5 of which are encoded in the nucleus.

The protein localises to the plastid. The protein resides in the chloroplast thylakoid membrane. It catalyses the reaction a plastoquinone + NADH + (n+1) H(+)(in) = a plastoquinol + NAD(+) + n H(+)(out). The catalysed reaction is a plastoquinone + NADPH + (n+1) H(+)(in) = a plastoquinol + NADP(+) + n H(+)(out). Its function is as follows. NDH shuttles electrons from NAD(P)H:plastoquinone, via FMN and iron-sulfur (Fe-S) centers, to quinones in the photosynthetic chain and possibly in a chloroplast respiratory chain. The immediate electron acceptor for the enzyme in this species is believed to be plastoquinone. Couples the redox reaction to proton translocation, and thus conserves the redox energy in a proton gradient. This chain is NAD(P)H-quinone oxidoreductase subunit 5, chloroplastic (ndhF), found in Triticum aestivum (Wheat).